Consider the following 331-residue polypeptide: MQSKQAPDTEILVIGGGPAGLHAAFYAAWRGLSVRVLEARGEVGGQLLALYPDKVIYDVPGVPQVRAAELVAALCAQLGPLDVDLRTGEVARTLEPDGTGGWVIGTAGARHRARAVILAAGMGALLPREVRVPGADTHPDVRADLPDPAGFAGRRVLVVGGVPQATRAAVELLEAGATVTLTHRRAGFRGDPLTLARLETARQASQMRLLAPAVLSRLTPQGAELVVEGAPLAVRADTVLILNGYLPDLSPLQAWPLAWDGEYVPDGPSGQTVLPGVYVIGDLARSGGDFKLLSLAFAQAAVAANHAAHHVRPELKMRPGHSSERGGYPVR.

The FAD site is built by Glu38, Gln46, Tyr51, Ala91, Leu125, Asp282, and Ser323.

This sequence belongs to the ferredoxin--NADP reductase type 2 family. In terms of assembly, homodimer. The cofactor is FAD.

The enzyme catalyses 2 reduced [2Fe-2S]-[ferredoxin] + NADP(+) + H(+) = 2 oxidized [2Fe-2S]-[ferredoxin] + NADPH. The protein is Ferredoxin--NADP reductase of Deinococcus geothermalis (strain DSM 11300 / CIP 105573 / AG-3a).